We begin with the raw amino-acid sequence, 231 residues long: Orotidine 5'-phosphate decarboxylase (231 aa).

Substrate contacts are provided by residues D11, K33, 60-69 (DLKLHDIPNT), T117, R179, Q187, G207, and R208. K62 functions as the Proton donor in the catalytic mechanism.

Belongs to the OMP decarboxylase family. Type 1 subfamily. As to quaternary structure, homodimer.

The enzyme catalyses orotidine 5'-phosphate + H(+) = UMP + CO2. The protein operates within pyrimidine metabolism; UMP biosynthesis via de novo pathway; UMP from orotate: step 2/2. Functionally, catalyzes the decarboxylation of orotidine 5'-monophosphate (OMP) to uridine 5'-monophosphate (UMP). The polypeptide is Orotidine 5'-phosphate decarboxylase (Ehrlichia chaffeensis (strain ATCC CRL-10679 / Arkansas)).